A 792-amino-acid polypeptide reads, in one-letter code: Chloride channel protein CLC-d (792 aa).

Transmembrane regions (helical) follow at residues 78–98, 119–139, 170–190, 195–215, 237–257, 267–287, 320–340, 361–381, 451–471, 474–494, 508–528, and 529–549; these read FFSL…NLSV, AGFI…AYII, RTLI…LALG, LVHT…TKYH, GCAA…LFAL, QLMW…RTAM, LLPM…FNQL, IIEA…LPLL, LLTF…TAVP, QFVP…MFVV, ALLG…SLCV, and IMVE…VLLI. 2 consecutive CBS domains span residues 592–652 and 704–761; these read QSQK…KVDF and LNPS…SSAV. The chain crosses the membrane as a helical span at residues 731–751; the sequence is HLFVVPRPSRVIGLITRKDLL.

Belongs to the chloride channel (TC 2.A.49) family. As to quaternary structure, homodimer. Broadly expressed in the plant, but predominantly in the silique.

The protein localises to the membrane. Its function is as follows. Voltage-gated chloride channel. In Arabidopsis thaliana (Mouse-ear cress), this protein is Chloride channel protein CLC-d (CLC-D).